A 509-amino-acid polypeptide reads, in one-letter code: Putative 6-phosphofructo-2-kinase/fructose-2,6-bisphosphatase YLR345W (509 aa).

Serine 6 carries the post-translational modification Phosphoserine. Residues serine 6 to lysine 291 are 6-phosphofructo-2-kinase. Glycine 90–leucine 98 provides a ligand contact to ATP. Aspartate 173 acts as the Proton donor/acceptor in catalysis. Asparagine 212–leucine 217 provides a ligand contact to ATP. Arginine 237 provides a ligand contact to beta-D-fructose 6-phosphate. The tract at residues glycine 292 to leucine 466 is fructose-2,6-bisphosphatase. Arginine 298 is a beta-D-fructose 2,6-bisphosphate binding site. Residue tyrosine 415 to serine 418 coordinates ATP. Residues tyrosine 433 and arginine 464 each coordinate beta-D-fructose 2,6-bisphosphate. ATP is bound at residue glutamate 460–arginine 464.

In the C-terminal section; belongs to the phosphoglycerate mutase family. Homodimer.

It localises to the cytoplasm. It catalyses the reaction beta-D-fructose 2,6-bisphosphate + H2O = beta-D-fructose 6-phosphate + phosphate. It carries out the reaction beta-D-fructose 6-phosphate + ATP = beta-D-fructose 2,6-bisphosphate + ADP + H(+). Synthesis and degradation of fructose 2,6-bisphosphate. This Saccharomyces cerevisiae (strain ATCC 204508 / S288c) (Baker's yeast) protein is Putative 6-phosphofructo-2-kinase/fructose-2,6-bisphosphatase YLR345W.